We begin with the raw amino-acid sequence, 598 residues long: uncharacterized protein (598 aa).

S46 carries the post-translational modification Phosphoserine. The 336-residue stretch at 106 to 441 (LQNHLKTGPF…ADYISLSYSG (336 aa)) folds into the SAC domain. The next 2 membrane-spanning stretches (helical) occupy residues 508–528 (TIRC…MTLF) and 535–555 (ILPP…SLYY).

The protein resides in the endoplasmic reticulum membrane. This is an uncharacterized protein from Schizosaccharomyces pombe (strain 972 / ATCC 24843) (Fission yeast).